Here is an 802-residue protein sequence, read N- to C-terminus: ATP-dependent zinc metalloprotease FTSH 3, mitochondrial (802 aa).

The N-terminal 21 residues, 1 to 21 (MSLSSLSRALARSARSSRQRQ), are a transit peptide targeting the mitochondrion. Low complexity predominate over residues 1 to 23 (MSLSSLSRALARSARSSRQRQGS). Disordered regions lie at residues 1–33 (MSLS…GLRA) and 85–120 (DKSK…SGDQ). The span at 85-113 (DKSKKNHGKHSEEENKGKGDESDKSDSKK) shows a compositional bias: basic and acidic residues. The chain crosses the membrane as a helical span at residues 133–153 (MIAPLFLFGLLLLSASASSSE). An ATP-binding site is contributed by 360-367 (GPPGTGKT). Residue H585 participates in Zn(2+) binding. Residue E586 is part of the active site. H589 and D661 together coordinate Zn(2+). The tract at residues 773–802 (KQGFQDEDSNRNAELSNADGASSLGEAVAS) is disordered.

It in the N-terminal section; belongs to the AAA ATPase family. This sequence in the C-terminal section; belongs to the peptidase M41 family. The cofactor is Zn(2+).

It localises to the mitochondrion inner membrane. Its function is as follows. Probable ATP-dependent zinc metallopeptidase. The sequence is that of ATP-dependent zinc metalloprotease FTSH 3, mitochondrial (FTSH3) from Oryza sativa subsp. japonica (Rice).